Here is a 178-residue protein sequence, read N- to C-terminus: Bifunctional protein PyrR (178 aa).

The PRPP-binding motif lies at 97-109 (VVLVDDVLYTGRT).

This sequence belongs to the purine/pyrimidine phosphoribosyltransferase family. PyrR subfamily.

It carries out the reaction UMP + diphosphate = 5-phospho-alpha-D-ribose 1-diphosphate + uracil. Regulates the transcription of the pyrimidine nucleotide (pyr) operon in response to exogenous pyrimidines. Functionally, also displays a weak uracil phosphoribosyltransferase activity which is not physiologically significant. This is Bifunctional protein PyrR from Herpetosiphon aurantiacus (strain ATCC 23779 / DSM 785 / 114-95).